Here is a 1611-residue protein sequence, read N- to C-terminus: Non-structural polyprotein 1AB (1611 aa).

Positions 124-187 (TTSNLIARAM…ELHLLKELGK (64 aa)) form a coiled coil. 7 consecutive transmembrane segments (helical) span residues 195–215 (AFSFFDWLFMAVVFFLFLHYT), 329–348 (ISYYKLDALVTFAFSAALAT), 353–373 (MVMVLPLLLVALYLNVPPITV), 375–395 (IASVIFQPLILPFVGFQLVFP), 397–417 (FLPYNLFVAWVWMVCQAFFSS), 426–446 (VSTALVQVVFLAVWSISVIVL), and 450–470 (SIPMVAQILLFVATLTVSVGV). Catalysis depends on charge relay system; for serine protease activity residues His550, Asp582, and Ser647. The residue at position 833 (Tyr833) is an O-(5'-phospho-RNA)-tyrosine. The region spanning 1352-1486 (RYYVELDWTR…AVDKRFINSY (135 aa)) is the RdRp catalytic domain.

It belongs to the astroviridae polyprotein 1AB family. As to quaternary structure, monomer. Cleaved by the viral and host proteases. The protease is probably autocatalytically cleaved.

It is found in the host membrane. The enzyme catalyses RNA(n) + a ribonucleoside 5'-triphosphate = RNA(n+1) + diphosphate. Its function is as follows. Responsible for the cleavage of the polyprotein into functional products. Protein covalently attached to the 5' extremity of the genomic and subgenomic RNAs. It may serve as a primer for the replicase. The protein is Non-structural polyprotein 1AB (ORF1) of Turkey astrovirus 1 (TAstV-1).